A 198-amino-acid chain; its full sequence is Auxin-binding protein 1 (198 aa).

The signal sequence occupies residues 1 to 33; that stretch reads MIVLSVGSASSSPIVVVFSVALLLFYFSETSLG. C36 and C189 form a disulfide bridge. Residues H92, H94, and E98 each contribute to the Zn(2+) site. N130 carries N-linked (GlcNAc...) asparagine glycosylation. H141 lines the Zn(2+) pocket. Positions 195–198 match the Prevents secretion from ER motif; sequence KDEL.

Homodimer. May interact with the GPI-anchored plasma membrane protein SKU5 and its family members. Interacts with TMK1 (via extracellular domain). Glycosylated. In terms of processing, ubiquitinated by RMA2, leading to proteasomal degradation.

The protein resides in the endoplasmic reticulum lumen. Its subcellular location is the cell membrane. Functionally, auxin receptor that controls cell elongation and cell division. Involved in embryonic morphogenesis. Acts on the cell cycle, endocycle, cell plate formation, and cell expansion and contributes to the control of auxin-related gene expression. Controls root meristem size and mediates auxin responsiveness. Involved in activation of ROP GTPases in response to auxin and regulation of clathrin-mediated endocytosis in roots. Acts as a positive factor in clathrin recruitment to the plasma membrane, thereby promoting endocytosis. Upon auxin binding, restricts the internalization of PIN proteins by inhibiting clathrin-mediated endocytosis. Promotes auxin-triggered phosphorylation status modulation of RAF-like kinases (e.g. RAF20 and RAF24). Involved in the regulation of polar auxin transport. Behaves as a negative regulator of the SCF(TIR1/AFB) signaling pathway, protecting AUX/IAA repressors from degradation. Regulates the expression of cell wall remodeling genes via an SCF(TIR1/AFB)-dependent pathway. Involved in the modulation of hemicellulose xyloglucan structure. Required for rapid auxin-mediated re-orientation of microtubules to regulate cell elongation in roots and dark-grown hypocotyls as well as asymmetric growth during gravitropic responses. Involved in the shade avoidance response. Forms with TMK1 a cell surface auxin perception complex that activates ROP signaling pathways. ABP1 sensing of auxin is important for the ABP1-TMK1 complex formation. Interacts functionally with phytochrome to regulate growth. The chain is Auxin-binding protein 1 from Arabidopsis thaliana (Mouse-ear cress).